Reading from the N-terminus, the 357-residue chain is U3 small nucleolar ribonucleoprotein protein LCP5 (357 aa).

Ser2 is modified (N-acetylserine). 2 disordered regions span residues 146–211 (STLV…YKPP) and 301–357 (NKAE…QRRL). A compositionally biased stretch (acidic residues) spans 155-166 (DDSEDDESSEDE). Positions 171 to 183 (PNTSGIINTNKKS) are enriched in polar residues. Basic and acidic residues-rich tracts occupy residues 187-196 (RVEETAKQEN) and 348-357 (SAWDRAQRRL).

Its subcellular location is the nucleus. The protein resides in the nucleolus. In terms of biological role, component of the U3 small nucleolar ribonucleoprotein. Required for the early cleavages at sites A0, A1 and A2 of the pre-ribosomal RNA. Participates in ribosome biogenesis. This Saccharomyces cerevisiae (strain ATCC 204508 / S288c) (Baker's yeast) protein is U3 small nucleolar ribonucleoprotein protein LCP5 (LCP5).